The chain runs to 198 residues: Recombination protein RecR (198 aa).

The C4-type zinc finger occupies 57–72; it reads CTVCGHITDTDPCYIC. One can recognise a Toprim domain in the interval 80–175; that stretch reads TTICVVQDPK…KVTRIAHGLP (96 aa).

Belongs to the RecR family.

May play a role in DNA repair. It seems to be involved in an RecBC-independent recombinational process of DNA repair. It may act with RecF and RecO. The sequence is that of Recombination protein RecR from Geobacillus sp. (strain WCH70).